A 1051-amino-acid chain; its full sequence is MKETPKKVLVIGSGPIKIAEAAEFDYSGSQALKALKEEGIETVLVNSNVATVQTSKKFADKLYMLPVVWWAVEKVIEKERPDGIMIGFGGQTALNVGVDLHKKGVLQKYGVKVLGTQIDGIEKALSREKFRETMIENNLPVPPSLSARSEEEAIKNAKIVGYPVMVRVSFNLGGRGSMVAWTEEDLKKNIRRALSQSYIGEVLIEKYLYHWIELEYEVMRDKKGNSSVIACIENLDPMGVHTGESTVVAPCQTLDNLEYQNMRTYTIEVARSINLIGECNVQFALNPRGYEYYIIETNPRMSRSSALASKATGYPLAYVSAKLALGYELHEVINKVSGRTCACFEPSLDYIVTKIPRWDLSKFENVDQSLATEMMSVGEVMSIGRSFEESLQKAVRMLDIGEPGVVGGKIYEAKMSKVEALKYLKERRPYWFLYVAKAFKEGATIDEVYEVTGISKFFLNKIKGLVDFYETLKILKEIDEETLKLAKKLGFSDEQISKALNKSTQYVRKIRDQSNIIPVVKLIDTLAGEWPSVTNYMYLTYNGTEDDLEFSQGNKLLIVGAGGFRIGVSVEFDWSVVSLMEAASKYFDEVAVLNYNPETVSTDWDIARKLYFDEINVERVLDLIKKEKFRYVATFSGGQIGNSIAKELEENGVRLLGTSGSSVDIAENREKFSKLLDKLGISQPNWVSATSLEEIKKFVNEVGFPVLVRPSYVLSGSSMKIAYSEEELYEYVRRATEISPKYPVVISKYIENAIEAEVDGVSDGNRVLGITLEHVEEAGVHSGDATMSIPFRKLSENSVNKMRENVLSLARELNIKGPFNVQFVVKDNTPHIIELNLRASRSMPFSSKAKGINLINEAMKAIFNGLDFSEDYYEPPSKYWAVKSPQFSWSQLRGTYPFLGPEMKSTGEAASFGVTFYDALLKSWLSSIPNRIPNKNGIALVYGDKNLDYLKDTAVNLVKFGLTVYSISELPLQGIETIDKTKAEELVRAKKVEIVVTDGYLKKFDYNIRRTAVDYNIPVILNGRLGYEVSKAFLDYDSLTFFEISEYGGGI.

Residues Met-1–Asp-399 are carboxyphosphate synthetic domain. ATP is bound by residues Arg-127, Arg-167, Gly-173, Gly-174, Lys-206, Leu-208, Glu-213, Gly-239, Val-240, His-241, Gln-282, and Glu-296. Positions Arg-131–Leu-325 constitute an ATP-grasp 1 domain. Residues Gln-282, Glu-296, and Asn-298 each coordinate Mg(2+). Positions 282, 296, and 298 each coordinate Mn(2+). Positions Ile-400–Leu-548 are oligomerization domain. A carbamoyl phosphate synthetic domain region spans residues Glu-549–Asn-930. The region spanning Ser-673–Phe-863 is the ATP-grasp 2 domain. Positions 709, 748, 750, 755, 779, 780, 781, 782, 822, and 834 each coordinate ATP. Residues Gln-822, Glu-834, and Asn-836 each coordinate Mg(2+). Gln-822, Glu-834, and Asn-836 together coordinate Mn(2+). The MGS-like domain maps to Asn-930 to Ile-1051. The allosteric domain stretch occupies residues Arg-931–Ile-1051.

Belongs to the CarB family. As to quaternary structure, composed of two chains; the small (or glutamine) chain promotes the hydrolysis of glutamine to ammonia, which is used by the large (or ammonia) chain to synthesize carbamoyl phosphate. Tetramer of heterodimers (alpha,beta)4. It depends on Mg(2+) as a cofactor. The cofactor is Mn(2+).

The enzyme catalyses hydrogencarbonate + L-glutamine + 2 ATP + H2O = carbamoyl phosphate + L-glutamate + 2 ADP + phosphate + 2 H(+). It catalyses the reaction hydrogencarbonate + NH4(+) + 2 ATP = carbamoyl phosphate + 2 ADP + phosphate + 2 H(+). It participates in amino-acid biosynthesis; L-arginine biosynthesis; carbamoyl phosphate from bicarbonate: step 1/1. Its pathway is pyrimidine metabolism; UMP biosynthesis via de novo pathway; (S)-dihydroorotate from bicarbonate: step 1/3. Functionally, large subunit of the glutamine-dependent carbamoyl phosphate synthetase (CPSase). CPSase catalyzes the formation of carbamoyl phosphate from the ammonia moiety of glutamine, carbonate, and phosphate donated by ATP, constituting the first step of 2 biosynthetic pathways, one leading to arginine and/or urea and the other to pyrimidine nucleotides. The large subunit (synthetase) binds the substrates ammonia (free or transferred from glutamine from the small subunit), hydrogencarbonate and ATP and carries out an ATP-coupled ligase reaction, activating hydrogencarbonate by forming carboxy phosphate which reacts with ammonia to form carbamoyl phosphate. This is Carbamoyl phosphate synthase large chain from Saccharolobus islandicus (strain L.S.2.15 / Lassen #1) (Sulfolobus islandicus).